We begin with the raw amino-acid sequence, 821 residues long: Leucine--tRNA ligase (821 aa).

Positions 44-54 (PYPSGRIHMGH) match the 'HIGH' region motif. A 'KMSKS' region motif is present at residues 589 to 593 (KMSKS). ATP is bound at residue Lys-592.

It belongs to the class-I aminoacyl-tRNA synthetase family.

The protein resides in the cytoplasm. It carries out the reaction tRNA(Leu) + L-leucine + ATP = L-leucyl-tRNA(Leu) + AMP + diphosphate. The polypeptide is Leucine--tRNA ligase (Campylobacter curvus (strain 525.92)).